We begin with the raw amino-acid sequence, 542 residues long: CTP synthase (542 aa).

Positions 1–265 are amidoligase domain; sequence MTRYIFVTGG…DEIIVERFGL (265 aa). Residue Ser13 participates in CTP binding. Residue Ser13 participates in UTP binding. ATP-binding positions include 14–19 and Asp71; that span reads SLGKGI. Mg(2+) contacts are provided by Asp71 and Glu139. CTP contacts are provided by residues 146-148, 186-191, and Lys222; these read DIE and KTKPTQ. UTP-binding positions include 186–191 and Lys222; that span reads KTKPTQ. Residues 290-541 enclose the Glutamine amidotransferase type-1 domain; that stretch reads TIAMVGKYME…VRAALENAGG (252 aa). Gly351 serves as a coordination point for L-glutamine. Cys378 acts as the Nucleophile; for glutamine hydrolysis in catalysis. L-glutamine contacts are provided by residues 379–382, Glu402, and Arg469; that span reads LGLQ. Catalysis depends on residues His514 and Glu516.

This sequence belongs to the CTP synthase family. Homotetramer.

The enzyme catalyses UTP + L-glutamine + ATP + H2O = CTP + L-glutamate + ADP + phosphate + 2 H(+). The catalysed reaction is L-glutamine + H2O = L-glutamate + NH4(+). It carries out the reaction UTP + NH4(+) + ATP = CTP + ADP + phosphate + 2 H(+). It participates in pyrimidine metabolism; CTP biosynthesis via de novo pathway; CTP from UDP: step 2/2. Its activity is regulated as follows. Allosterically activated by GTP, when glutamine is the substrate; GTP has no effect on the reaction when ammonia is the substrate. The allosteric effector GTP functions by stabilizing the protein conformation that binds the tetrahedral intermediate(s) formed during glutamine hydrolysis. Inhibited by the product CTP, via allosteric rather than competitive inhibition. Its function is as follows. Catalyzes the ATP-dependent amination of UTP to CTP with either L-glutamine or ammonia as the source of nitrogen. Regulates intracellular CTP levels through interactions with the four ribonucleotide triphosphates. In Hahella chejuensis (strain KCTC 2396), this protein is CTP synthase.